The sequence spans 150 residues: MVLCFPLLLLLLVLWGPVCPLHAWPKRLTKAHWFEIQHIQPSPLQCNRAMSGINNYTQHCKHQNTFLHDSFQNVAAVCDLLSIVCKNRRHNCHQSSKPVNMTDCRLTSGKYPQCRYSAAAQYKFFIVACDPPQKSDPPYKLVPVHLDSIL.

Residues 1-23 (MVLCFPLLLLLLVLWGPVCPLHA) form the signal peptide. H38 acts as the Proton acceptor in catalysis. Cystine bridges form between C46-C104, C60-C114, C78-C129, and C85-C92. An N-linked (GlcNAc...) asparagine glycan is attached at N55. Substrate contacts are provided by residues 61–65 (KHQNT) and K86. N100 carries N-linked (GlcNAc...) asparagine glycosylation. Residue R105 coordinates substrate. The Proton donor role is filled by H145.

It belongs to the pancreatic ribonuclease family. Interacts (via N-terminus) with bacterial lipopolysaccharide (LPS). In terms of tissue distribution, highly expressed in spleen (at protein level). Has little or no expression in healthy kidneys (at protein level). Detected in interstitial leukocytes in infected kidneys (at protein level). Expressed in ureter where it localizes to urothelial and submucosal leukocytes (at protein level). Strong expression in lung and thymus, and lower expression in heart, placenta, pancreas, liver, brain and skeletal muscle. Also expressed in monocytes and neutrophils.

Its subcellular location is the secreted. It is found in the lysosome. The protein resides in the cytoplasmic granule. In terms of biological role, ribonuclease which shows a preference for the pyrimidines uridine and cytosine. Has potent antibacterial activity against a range of Gram-positive and Gram-negative bacteria, including P.aeruginosa, A.baumanii, M.luteus, S.aureus, E.faecalis, E.faecium, S.saprophyticus and E.coli. Causes loss of bacterial membrane integrity, and also promotes agglutination of Gram-negative bacteria. Probably contributes to urinary tract sterility. Bactericidal activity is independent of RNase activity. In Homo sapiens (Human), this protein is Ribonuclease K6 (RNASE6).